A 93-amino-acid chain; its full sequence is MTKGTSSFGKRHNKTHTLCRRCGRSSYHIQKSTCAQCGYPAAKLRSYNWSVKAKRRKTTGTGRMQHLKVVRRRFRNGFREGTQAKPKKAVASK.

Zn(2+) contacts are provided by C19, C22, C34, and C37. A C4-type zinc finger spans residues 19–37; sequence CRRCGRSSYHIQKSTCAQC.

This sequence belongs to the eukaryotic ribosomal protein eL37 family. Requires Zn(2+) as cofactor.

Binds to the 23S rRNA. In Drosophila melanogaster (Fruit fly), this protein is Large ribosomal subunit protein eL37A.